Consider the following 318-residue polypeptide: Acetyl-coenzyme A carboxylase carboxyl transferase subunit alpha (318 aa).

Residues 38-292 (KLEKRLAKLE…NKTITKSLHA (255 aa)) form the CoA carboxyltransferase C-terminal domain.

This sequence belongs to the AccA family. Acetyl-CoA carboxylase is a heterohexamer composed of biotin carboxyl carrier protein (AccB), biotin carboxylase (AccC) and two subunits each of ACCase subunit alpha (AccA) and ACCase subunit beta (AccD).

It is found in the cytoplasm. It carries out the reaction N(6)-carboxybiotinyl-L-lysyl-[protein] + acetyl-CoA = N(6)-biotinyl-L-lysyl-[protein] + malonyl-CoA. It participates in lipid metabolism; malonyl-CoA biosynthesis; malonyl-CoA from acetyl-CoA: step 1/1. Functionally, component of the acetyl coenzyme A carboxylase (ACC) complex. First, biotin carboxylase catalyzes the carboxylation of biotin on its carrier protein (BCCP) and then the CO(2) group is transferred by the carboxyltransferase to acetyl-CoA to form malonyl-CoA. The protein is Acetyl-coenzyme A carboxylase carboxyl transferase subunit alpha of Listeria innocua serovar 6a (strain ATCC BAA-680 / CLIP 11262).